The following is a 644-amino-acid chain: Exoribonuclease 2 (644 aa).

The region spanning 189–516 is the RNB domain; the sequence is REDLTALDFV…NHRLLKAIIK (328 aa). The region spanning 561–643 is the S1 motif domain; sequence DSRFAAEIID…ETRSVIARPV (83 aa).

Belongs to the RNR ribonuclease family. RNase II subfamily.

It is found in the cytoplasm. It catalyses the reaction Exonucleolytic cleavage in the 3'- to 5'-direction to yield nucleoside 5'-phosphates.. Involved in mRNA degradation. Hydrolyzes single-stranded polyribonucleotides processively in the 3' to 5' direction. The sequence is that of Exoribonuclease 2 from Cronobacter sakazakii (strain ATCC BAA-894) (Enterobacter sakazakii).